A 308-amino-acid chain; its full sequence is Aspartate carbamoyltransferase catalytic subunit (308 aa).

Positions 57 and 58 each coordinate carbamoyl phosphate. Lys86 is a binding site for L-aspartate. Arg107, His135, and Gln138 together coordinate carbamoyl phosphate. Residues Arg168 and Arg229 each contribute to the L-aspartate site. Residues Leu268 and Pro269 each contribute to the carbamoyl phosphate site.

It belongs to the aspartate/ornithine carbamoyltransferase superfamily. ATCase family. As to quaternary structure, heterooligomer of catalytic and regulatory chains.

The enzyme catalyses carbamoyl phosphate + L-aspartate = N-carbamoyl-L-aspartate + phosphate + H(+). The protein operates within pyrimidine metabolism; UMP biosynthesis via de novo pathway; (S)-dihydroorotate from bicarbonate: step 2/3. Catalyzes the condensation of carbamoyl phosphate and aspartate to form carbamoyl aspartate and inorganic phosphate, the committed step in the de novo pyrimidine nucleotide biosynthesis pathway. This chain is Aspartate carbamoyltransferase catalytic subunit, found in Thermococcus gammatolerans (strain DSM 15229 / JCM 11827 / EJ3).